The chain runs to 373 residues: Transaldolase (373 aa).

The Schiff-base intermediate with substrate role is filled by K143.

It belongs to the transaldolase family. Type 2 subfamily.

The protein resides in the cytoplasm. The enzyme catalyses D-sedoheptulose 7-phosphate + D-glyceraldehyde 3-phosphate = D-erythrose 4-phosphate + beta-D-fructose 6-phosphate. The protein operates within carbohydrate degradation; pentose phosphate pathway; D-glyceraldehyde 3-phosphate and beta-D-fructose 6-phosphate from D-ribose 5-phosphate and D-xylulose 5-phosphate (non-oxidative stage): step 2/3. Its function is as follows. Transaldolase is important for the balance of metabolites in the pentose-phosphate pathway. The polypeptide is Transaldolase (Mycolicibacterium paratuberculosis (strain ATCC BAA-968 / K-10) (Mycobacterium paratuberculosis)).